Here is a 373-residue protein sequence, read N- to C-terminus: Leucine-, isoleucine-, valine-, threonine-, and alanine-binding protein (373 aa).

An N-terminal signal peptide occupies residues 1–26; the sequence is MKKGTQRLSRLFAAMAIAGFASYSMA. A disulfide bridge connects residues Cys80 and Cys105.

The protein belongs to the leucine-binding protein family.

Its subcellular location is the periplasm. In terms of biological role, component of the high-affinity leucine, isoleucine, valine transport system I (LIV-I), which is operative without Na(+) and is specific for alanine and threonine, in addition to branched-chain amino acids. Binds L-leucine, L-isoleucine, L-valine, L-threonine and L-alanine with nanomolar affinities. Can also bind L-homoserine with high affinity. In Pseudomonas aeruginosa (strain ATCC 15692 / DSM 22644 / CIP 104116 / JCM 14847 / LMG 12228 / 1C / PRS 101 / PAO1), this protein is Leucine-, isoleucine-, valine-, threonine-, and alanine-binding protein (braC).